We begin with the raw amino-acid sequence, 237 residues long: NAD-dependent protein deacylase (237 aa).

Residues 1–235 (MRVVVLSGAG…PGLLQRLPAL (235 aa)) enclose the Deacetylase sirtuin-type domain. 8 to 28 (GAGISAESDVPTFRDDKNGLW) serves as a coordination point for NAD(+). Residues tyrosine 53 and arginine 56 each contribute to the substrate site. 86–89 (QNVD) serves as a coordination point for NAD(+). Histidine 104 acts as the Proton acceptor in catalysis. Cysteine 112, cysteine 115, cysteine 138, and cysteine 140 together coordinate Zn(2+). NAD(+) contacts are provided by residues 177-179 (GTS), 203-205 (NPE), and alanine 221.

The protein belongs to the sirtuin family. Class III subfamily. It depends on Zn(2+) as a cofactor.

It localises to the cytoplasm. It carries out the reaction N(6)-acetyl-L-lysyl-[protein] + NAD(+) + H2O = 2''-O-acetyl-ADP-D-ribose + nicotinamide + L-lysyl-[protein]. The enzyme catalyses N(6)-succinyl-L-lysyl-[protein] + NAD(+) + H2O = 2''-O-succinyl-ADP-D-ribose + nicotinamide + L-lysyl-[protein]. Its function is as follows. NAD-dependent lysine deacetylase and desuccinylase that specifically removes acetyl and succinyl groups on target proteins. Modulates the activities of several proteins which are inactive in their acylated form. The polypeptide is NAD-dependent protein deacylase (Mycobacterium leprae (strain TN)).